A 427-amino-acid polypeptide reads, in one-letter code: Glutamate-1-semialdehyde 2,1-aminomutase (427 aa).

An N6-(pyridoxal phosphate)lysine modification is found at Lys-265.

It belongs to the class-III pyridoxal-phosphate-dependent aminotransferase family. HemL subfamily. Homodimer. Requires pyridoxal 5'-phosphate as cofactor.

It localises to the cytoplasm. It catalyses the reaction (S)-4-amino-5-oxopentanoate = 5-aminolevulinate. It participates in porphyrin-containing compound metabolism; protoporphyrin-IX biosynthesis; 5-aminolevulinate from L-glutamyl-tRNA(Glu): step 2/2. The sequence is that of Glutamate-1-semialdehyde 2,1-aminomutase from Neisseria meningitidis serogroup B (strain ATCC BAA-335 / MC58).